The sequence spans 2136 residues: Methylcytosine dioxygenase TET1 (2136 aa).

2 stretches are compositionally biased toward basic residues: residues 1–12 (MSRSRHARPSRL) and 20–31 (KKKKNSQLRKTT). The segment at 1–47 (MSRSRHARPSRLVRKEDVNKKKKNSQLRKTTKGANKNVASVKTLSPG) is disordered. Polar residues predominate over residues 32 to 43 (KGANKNVASVKT). The interval 528–674 (LGIAQLSQAG…NGPKSESMDY (147 aa)) is sufficient for binding to genomic CpG islands. The CXXC-type zinc-finger motif lies at 584 to 625 (EKKKRKRCGVCEPCQQKTNCGECTYCKNRKNSHQICKKRKCE). Zn(2+)-binding residues include C591, C594, C597, C603, C606, C609, C619, and C624. Basic and acidic residues-rich tracts occupy residues 712–724 (QNKK…HVKG), 732–743 (EAEKSKNSEVDK), and 849–869 (IHNE…EPKD). Disordered stretches follow at residues 712-746 (QNKK…KKRT), 849-876 (IHNE…VQPS), 899-923 (QLSE…EQRT), and 1119-1169 (EKGT…VSYQ). Phosphoserine is present on S871. Positions 901-911 (SEAPSENSSPS) are enriched in low complexity. Over residues 1119–1139 (EKGTIQQKPPSSVHNNHGSSL) the composition is skewed to polar residues. The span at 1146–1163 (TQKKTKSTPSRDRRKKKP) shows a compositional bias: basic residues. C1422, C1424, C1482, H1508, and C1510 together coordinate Zn(2+). Residue R1551 coordinates 2-oxoglutarate. Zn(2+) is bound by residues C1561, C1563, C1579, and C1588. Residues 1580–1593 (SWSMYFNGCKFGRS) are interaction with DNA. A Glycyl lysine isopeptide (Lys-Gly) (interchain with G-Cter in ubiquitin) cross-link involves residue K1589. A Zn(2+)-binding site is contributed by C1648. C1664 lines the 2-oxoglutarate pocket. H1670 is a Zn(2+) binding site. The Fe cation site is built by H1672 and D1674. Substrate is bound at residue N1677. Position 1706 (H1706) interacts with 2-oxoglutarate. Disordered stretches follow at residues 1774–1897 (EKKP…AAAD) and 1919–1984 (EPLI…SPAE). Residues 1786–1800 (NSTTTNNSKPSSLPT) show a composition bias toward low complexity. Composition is skewed to polar residues over residues 1824-1833 (SSDNTKTYSL) and 1937-1953 (HQPN…QDLA). Residues 1957 to 1976 (MEEDEQHSEADEPPSDEPLS) show a composition bias toward acidic residues. H2028 lines the Fe cation pocket. 2043–2045 (RLS) serves as a coordination point for 2-oxoglutarate. 2049-2051 (YQH) is a substrate binding site. H2059 lines the Zn(2+) pocket. The span at 2074 to 2087 (KNKKMKASEQKDQA) shows a compositional bias: basic and acidic residues. Residues 2074–2100 (KNKKMKASEQKDQAANEGPEQSSEVNE) form a disordered region.

The protein belongs to the TET family. As to quaternary structure, interacts with SIN3A; recruits the transcriptional corepressor SIN3A to gene promoters. Interacts with HCFC1. Interacts (via C-terminus) with OGT. Found in a complex composed of at least SINHCAF, SIN3A, HDAC1, SAP30, RBBP4, OGT and TET1. Interacts with QSER1. Interacts with NONO (via DNA-binding domain); this interaction recruits TET1 to genomic loci. Interacts with FOXA2; this interaction may recruit TET1 to specific enhancers to preserve their unmethylated status and hence allowing gene expression. Interacts with RNF2. Directly interacts (via C-terminus) with the DCAF1 component of the CRL4(VprBP) E3 ubiquitin-protein ligase complex. Interacts with UHRF1; this interaction induces the recruitment of TET1 to replicating heterochromatin. Interacts with DCAF1. Fe(2+) is required as a cofactor. It depends on Zn(2+) as a cofactor. Post-translationally, glycosylated. Interaction with OGT leads to GlcNAcylation. Monoubiquitinated at Lys-1589 by the DCX (DDB1-CUL4-X-box) E3 ubiquitin-protein ligase complex called CRL4(VprBP) or CUL4A-RBX1-DDB1-DCAF1/VPRBP complex; this modification promotes binding to DNA. Expressed in fetal heart, lung and brain, and in adult skeletal muscle, thymus and ovary. Not detected in adult heart, lung or brain. Up-regulated in glioblastoma cells (at protein level). In terms of tissue distribution, expressed in embryonic stem cells (at protein level).

It is found in the nucleus. The protein localises to the chromosome. It carries out the reaction a 5-methyl-2'-deoxycytidine in DNA + 2-oxoglutarate + O2 = a 5-hydroxymethyl-2'-deoxycytidine in DNA + succinate + CO2. The enzyme catalyses a 5-hydroxymethyl-2'-deoxycytidine in DNA + 2-oxoglutarate + O2 = a 5-formyl-2'-deoxycytidine in DNA + succinate + CO2 + H2O. It catalyses the reaction a 5-formyl-2'-deoxycytidine in DNA + 2-oxoglutarate + O2 = a 5-carboxyl-2'-deoxycytidine in DNA + succinate + CO2 + H(+). In terms of biological role, dioxygenase that plays a key role in active DNA demethylation, by catalyzing the sequential oxidation of the modified genomic base 5-methylcytosine (5mC) into 5-hydroxymethylcytosine (5hmC), 5-formylcytosine (5fC), and 5-carboxylcytosine (5caC). In addition to its role in DNA demethylation, plays a more general role in chromatin regulation by recruiting histone modifying protein complexes to alter histone marks and chromatin accessibility, leading to both activation and repression of gene expression. Plays therefore a role in many biological processes, including stem cell maintenance, T- and B-cell development, inflammation regulation, genomic imprinting, neural activity or DNA repair. Involved in the balance between pluripotency and lineage commitment of cells and plays a role in embryonic stem cells maintenance and inner cell mass cell specification. Together with QSER1, plays an essential role in the protection and maintenance of transcriptional and developmental programs to inhibit the binding of DNMT3A/3B and therefore de novo methylation. May play a role in pancreatic beta-cell specification during development. In this context, may function as an upstream epigenetic regulator of PAX4 presumably through direct recruitment by FOXA2 to a PAX4 enhancer to preserve its unmethylated status, thereby potentiating PAX4 expression to adopt beta-cell fate during endocrine lineage commitment. Under DNA hypomethylation conditions, such as in female meiotic germ cells, may induce epigenetic reprogramming of pericentromeric heterochromatin (PCH), the constitutive heterochromatin of pericentromeric regions. PCH forms chromocenters in the interphase nucleus and chromocenters cluster at the prophase of meiosis. In this context, may also be essential for chromocenter clustering in a catalytic activity-independent manner, possibly through the recruitment polycomb repressive complex 1 (PRC1) to the chromocenters. During embryonic development, may be required for normal meiotic progression in oocytes and meiotic gene activation. Binds preferentially to DNA containing cytidine-phosphate-guanosine (CpG) dinucleotides over CpH (H=A, T, and C), hemimethylated-CpG and hemimethylated-hydroxymethyl-CpG. Its function is as follows. Dioxygenase that plays a key role in active DNA demethylation. Binds to promoters, particularly to those with high CG content. In hippocampal neurons, isoform 1 regulates the expression of a unique subset of genes compared to isoform 2, although some overlap exists between both isoforms, hence differentially regulates excitatory synaptic transmission. In hippocampal neuron cell cultures, isoform 1 controls both miniature excitatory postsynaptic current amplitude and frequency. Isoform 1 may regulate genes involved in hippocampal-dependent memory, leading to positive regulation of memory, contrary to isoform 2 that may decrease memory. Functionally, dioxygenase that plays a key role in active DNA demethylation. As isoform 1, binds to promoters, particularly to those with high CG content, however displays reduced global chromatin affinity compared with isoform 1, leading to decreased global DNA demethylation compared with isoform 1. Contrary to isoform 1, isoform 2 localizes during S phase to sites of ongoing DNA replication in heterochromatin, causing a significant de novo 5hmC formation, globally, and more so in heterochromatin, including LINE 1 interspersed DNA repeats leading to their activation. In hippocampal neurons, isoform 2 regulates the expression of a unique subset of genes compared to isoform 1, although some overlap between both isoforms, hence differentially regulates excitatory synaptic transmission. In hippocampal neuron cell cultures, isoform 2 controls miniature excitatory postsynaptic current frequency, but not amplitude. Isoform 2 may regulate genes involved in hippocampal-dependent memory, leading to negative regulation of memory, contrary to isoform 1 that may improve memory. In immature and partially differentiated gonadotrope cells, directly represses luteinizing hormone gene LHB expression and does not catalyze 5hmC at the gene promoter. In Homo sapiens (Human), this protein is Methylcytosine dioxygenase TET1.